We begin with the raw amino-acid sequence, 142 residues long: Peptide methionine sulfoxide reductase MsrB (142 aa).

The MsrB domain maps to 13–135 (EKDWKVELSE…NSLSMTFKGE (123 aa)). 4 residues coordinate Zn(2+): C52, C55, C101, and C104. The active-site Nucleophile is the C124.

The protein belongs to the MsrB Met sulfoxide reductase family. It depends on Zn(2+) as a cofactor.

It carries out the reaction L-methionyl-[protein] + [thioredoxin]-disulfide + H2O = L-methionyl-(R)-S-oxide-[protein] + [thioredoxin]-dithiol. In Alteromonas mediterranea (strain DSM 17117 / CIP 110805 / LMG 28347 / Deep ecotype), this protein is Peptide methionine sulfoxide reductase MsrB.